Consider the following 808-residue polypeptide: Transcription activator of gluconeogenesis PAAG_01030 (808 aa).

The tract at residues 1 to 90 (MTSSVRNGSP…SAKDPLRPRR (90 aa)) is disordered. Residues 69–83 (STSSTAASANNASAK) are compositionally biased toward low complexity. The zn(2)-C6 fungal-type DNA-binding region spans 97 to 125 (CFACQRAHLTCGDERPCQRCIKRGLQDTC). Over residues 158-170 (AARNKVNSNSQQR) the composition is skewed to polar residues. Disordered regions lie at residues 158 to 203 (AARN…FSTP), 236 to 285 (SAFQ…YGST), 322 to 387 (GAGD…IYNQ), 442 to 461 (PPTN…STPS), and 598 to 629 (TGGS…DNQS). A compositionally biased stretch (low complexity) spans 171-188 (NGTNSNSDNNSTNTNSNN). 4 stretches are compositionally biased toward polar residues: residues 189 to 203 (KPSH…FSTP), 248 to 279 (FDLS…SQNP), 339 to 359 (GRSS…NQSP), and 377 to 387 (GPTNPRNIYNQ). Low complexity-rich tracts occupy residues 442–451 (PPTNTQHQQQ) and 598–619 (TGGS…SRNS). Residues 620–629 (ATTTVMDNQS) show a composition bias toward polar residues.

Belongs to the ERT1/acuK family.

It is found in the nucleus. In terms of biological role, transcription factor which regulates nonfermentable carbon utilization. Activator of gluconeogenetic genes. This Paracoccidioides lutzii (strain ATCC MYA-826 / Pb01) (Paracoccidioides brasiliensis) protein is Transcription activator of gluconeogenesis PAAG_01030.